A 144-amino-acid polypeptide reads, in one-letter code: Large ribosomal subunit protein uL15 (144 aa).

Residues 1–54 (MRLNTIKPGEGSKKTAKRVGRGIGSGLGKTCGRGHKGQKSRSGGFHKVGFEGGQ) form a disordered region. A compositionally biased stretch (gly residues) spans 21 to 31 (RGIGSGLGKTC).

The protein belongs to the universal ribosomal protein uL15 family. As to quaternary structure, part of the 50S ribosomal subunit.

Functionally, binds to the 23S rRNA. The chain is Large ribosomal subunit protein uL15 from Dechloromonas aromatica (strain RCB).